The primary structure comprises 124 residues: Large ribosomal subunit protein bL21 (124 aa).

It belongs to the bacterial ribosomal protein bL21 family. Part of the 50S ribosomal subunit. Contacts protein L20.

In terms of biological role, this protein binds to 23S rRNA in the presence of protein L20. The polypeptide is Large ribosomal subunit protein bL21 (Synechococcus sp. (strain WH7803)).